We begin with the raw amino-acid sequence, 503 residues long: Plant-specific TFIIB-related protein 1 (503 aa).

A TFIIB-type zinc finger spans residues 1-33 (MKCPYCSSAQGRCTTTSSGRSITECSSCGRVME). Disordered regions lie at residues 328 to 366 (PEKA…AKPI), 411 to 431 (NAMD…LGDK), 436 to 455 (IYLR…TGIS), and 468 to 503 (GSSS…HGDF). The span at 333–346 (PTTTISTTRSTTPR) shows a compositional bias: low complexity. Basic and acidic residues predominate over residues 355–366 (FVEKDKPSAKPI).

Post-translationally, ubiquinated. Subsequent degradation by the proteasome pathway. Widely expressed.

Its subcellular location is the plastid. It localises to the chloroplast outer membrane. It is found in the nucleus. Functionally, plant-specific TFIIB-related protein that may be involved in an intracellular signaling pathway between plastids and the nucleus. May act as general transcription factor (GTF) of RNA polymerase I-dependent transcription and rRNA synthesis. Forms a ternary complex with TBP2 and the rDNA promoter region. This is Plant-specific TFIIB-related protein 1 from Arabidopsis thaliana (Mouse-ear cress).